Here is a 158-residue protein sequence, read N- to C-terminus: Phosphopantetheine adenylyltransferase (158 aa).

T9 serves as a coordination point for substrate. ATP contacts are provided by residues 9–10 (TF) and H17. K41, L73, and R87 together coordinate substrate. ATP is bound by residues 88–90 (GVR), E98, and 123–129 (WSYVSST).

The protein belongs to the bacterial CoaD family. Homohexamer. Requires Mg(2+) as cofactor.

It localises to the cytoplasm. The enzyme catalyses (R)-4'-phosphopantetheine + ATP + H(+) = 3'-dephospho-CoA + diphosphate. The protein operates within cofactor biosynthesis; coenzyme A biosynthesis; CoA from (R)-pantothenate: step 4/5. In terms of biological role, reversibly transfers an adenylyl group from ATP to 4'-phosphopantetheine, yielding dephospho-CoA (dPCoA) and pyrophosphate. This is Phosphopantetheine adenylyltransferase from Histophilus somni (strain 129Pt) (Haemophilus somnus).